The chain runs to 500 residues: 2-isopropylmalate synthase (500 aa).

The Pyruvate carboxyltransferase domain occupies 5–266 (LFIFDTTLRD…ITNITTNKIY (262 aa)). Residues D14, H202, H204, and N238 each coordinate Mn(2+). Positions 389–500 (KLEYLQVTSG…VDAINKFIVD (112 aa)) are regulatory domain.

Belongs to the alpha-IPM synthase/homocitrate synthase family. LeuA type 1 subfamily. As to quaternary structure, homodimer. It depends on Mn(2+) as a cofactor.

The protein localises to the cytoplasm. The enzyme catalyses 3-methyl-2-oxobutanoate + acetyl-CoA + H2O = (2S)-2-isopropylmalate + CoA + H(+). It participates in amino-acid biosynthesis; L-leucine biosynthesis; L-leucine from 3-methyl-2-oxobutanoate: step 1/4. Catalyzes the condensation of the acetyl group of acetyl-CoA with 3-methyl-2-oxobutanoate (2-ketoisovalerate) to form 3-carboxy-3-hydroxy-4-methylpentanoate (2-isopropylmalate). This chain is 2-isopropylmalate synthase, found in Parabacteroides distasonis (strain ATCC 8503 / DSM 20701 / CIP 104284 / JCM 5825 / NCTC 11152).